The sequence spans 854 residues: ATP-dependent zinc metalloprotease FtsH (854 aa).

At 1–5 (MNRKT) the chain is on the cytoplasmic side. The helical transmembrane segment at 6–26 (VFRNVLLVAVVLLVIYAFSYF) threads the bilayer. Residues 27–112 (SNDTRDFKTV…FNTTVTQESW (86 aa)) are Extracellular-facing. Residues 113–133 (LTSILLFVLPMIILFGIFFFV) traverse the membrane as a helical segment. Residues 134–854 (MNRMQGGGGR…ARWDGPDGSR (721 aa)) lie on the Cytoplasmic side of the membrane. 207–214 (GPPGTGKT) contributes to the ATP binding site. His429 serves as a coordination point for Zn(2+). Glu430 is a catalytic residue. 2 residues coordinate Zn(2+): His433 and Asp505. Positions 658-854 (AGAPNSGVPN…ARWDGPDGSR (197 aa)) are disordered. 2 stretches are compositionally biased toward low complexity: residues 661 to 692 (PNSG…AQPS) and 698 to 719 (APQQ…WSAP). The segment covering 720 to 730 (GWPPRENPSPT) has biased composition (pro residues). The segment covering 749–778 (NQSQGQYGQPQHGQPQPDQGQYGQPHPGQQ) has biased composition (low complexity). The span at 812–822 (GNPSGENQWQS) shows a compositional bias: polar residues. A compositionally biased stretch (pro residues) spans 825–834 (PEQPQTPPPH).

The protein in the central section; belongs to the AAA ATPase family. It in the C-terminal section; belongs to the peptidase M41 family. As to quaternary structure, homohexamer. It depends on Zn(2+) as a cofactor.

It is found in the cell membrane. Its function is as follows. Acts as a processive, ATP-dependent zinc metallopeptidase for both cytoplasmic and membrane proteins. Plays a role in the quality control of integral membrane proteins. The chain is ATP-dependent zinc metalloprotease FtsH from Rhodococcus erythropolis (strain PR4 / NBRC 100887).